Reading from the N-terminus, the 403-residue chain is Methylthioribose-1-phosphate isomerase (403 aa).

Asp277 serves as the catalytic Proton donor.

It belongs to the eIF-2B alpha/beta/delta subunits family. MtnA subfamily.

It is found in the cytoplasm. The protein resides in the nucleus. The catalysed reaction is 5-(methylsulfanyl)-alpha-D-ribose 1-phosphate = 5-(methylsulfanyl)-D-ribulose 1-phosphate. The protein operates within amino-acid biosynthesis; L-methionine biosynthesis via salvage pathway; L-methionine from S-methyl-5-thio-alpha-D-ribose 1-phosphate: step 1/6. In terms of biological role, catalyzes the interconversion of methylthioribose-1-phosphate (MTR-1-P) into methylthioribulose-1-phosphate (MTRu-1-P). The sequence is that of Methylthioribose-1-phosphate isomerase from Lodderomyces elongisporus (strain ATCC 11503 / CBS 2605 / JCM 1781 / NBRC 1676 / NRRL YB-4239) (Yeast).